A 437-amino-acid chain; its full sequence is MQQFRFIDLFAGIGGFRLGLEAVGGVCVASAEIDQQAIKVYRQNWPTDGVDHNLGDITAIQQLPAHDVLVGGVPCQPWSIAGKNQAFDDPRGQLWADVIRLVQINQPKAFIFENVKGLVDPRNRLCLEIILDSFKDLGYSVFYKLLNSFDFGVAQNRDRVFIVGIQQKLDLNGFSFPEYTESEQRLYHILDNLEVPETKLESIPIQRNLFGERIDVGYNKLTPRGAFNDFFILNDIRNGPTSIHSWEIYPTTEREKQICMIIMRNRRNSRYGDCDGNPMSYQDIAELVAGLAEKELQTLVEKRILRQYPDGKYEFFNRRLSGGIDGTYRIFLPNARFFGTLTARGMHDEIAEISVSGANAEEYKHNFIQQVLIPKRYRKITVSEAARLQGFPGSFQFHSNQSANFRLIGNSVAPPVIVALGKALQCVKLFEQELCEV.

The SAM-dependent MTase C5-type domain maps to 4-431 (FRFIDLFAGI…KALQCVKLFE (428 aa)). Cysteine 75 is an active-site residue.

It belongs to the class I-like SAM-binding methyltransferase superfamily. C5-methyltransferase family.

The enzyme catalyses a 2'-deoxycytidine in DNA + S-adenosyl-L-methionine = a 5-methyl-2'-deoxycytidine in DNA + S-adenosyl-L-homocysteine + H(+). In terms of biological role, a methylase that recognizes the double-stranded sequence 5'-GGWCC-3', methylates C-? on both strands, and protects the DNA from cleavage by the HgiBI endonuclease. This system is less active than isoschizomeric RM.HgiEI. This chain is Type II methyltransferase M.HgiBI, found in Herpetosiphon aurantiacus (Herpetosiphon giganteus).